A 208-amino-acid chain; its full sequence is AN1-type zinc finger protein 6 (208 aa).

An A20-type zinc finger spans residues 8 to 42 (SQVPMLCSTGCGFYGNPRTNGMCSVCYKEHLQRQN). Residues C14, C18, C30, and C33 each contribute to the Zn(2+) site. Residues 41–110 (QNSSNGRISP…ASSQVDSTSV (70 aa)) form a disordered region. S49 bears the Phosphoserine mark. Polar residues predominate over residues 54-68 (SVTSLSESLPVQCTD). The span at 83-94 (SSVQPSPVSNQS) shows a compositional bias: low complexity. A compositionally biased stretch (polar residues) spans 95 to 110 (LLSESVASSQVDSTSV). The AN1-type zinc-finger motif lies at 143–189 (KQKKNRCFMCRKKVGLTGFECRCGNVYCGVHRYSDVHNCSYNYKADA). C149, C152, C163, C165, C170, H173, H179, and C181 together coordinate Zn(2+). The residue at position 204 (K204) is an N6-acetyllysine.

Interacts with PKN1.

In Bos taurus (Bovine), this protein is AN1-type zinc finger protein 6 (ZFAND6).